Here is a 463-residue protein sequence, read N- to C-terminus: Mitochondrial dynamics protein MID49 (463 aa).

The Mitochondrial intermembrane segment spans residues 1 to 24 (MAELQIRKKEKKSGDGIGTMVDFL). The chain crosses the membrane as a helical span at residues 25-47 (LANARLVLGVGGAAMLGIATLAV). Over 48–463 (KRLIDRATSP…EPDDVLKRER (416 aa)) the chain is Cytoplasmic. Residues 87 to 119 (TLRRKEDLEHHCAPLSLPDPSQKMPEATGTSQV) are disordered. A compositionally biased stretch (basic and acidic residues) spans 89–98 (RRKEDLEHHC).

It belongs to the MID49/MID51 family.

It localises to the mitochondrion outer membrane. Functionally, mitochondrial outer membrane protein which regulates mitochondrial organization. It is required for mitochondrial fission and promotes the recruitment and association of the fission mediator dynamin-related protein 1 (DNM1L) to the mitochondrial surface independently of the mitochondrial fission FIS1 and MFF proteins. Regulates DNM1L GTPase activity. The polypeptide is Mitochondrial dynamics protein MID49 (mief2) (Xenopus laevis (African clawed frog)).